Reading from the N-terminus, the 156-residue chain is 6,7-dimethyl-8-ribityllumazine synthase (156 aa).

5-amino-6-(D-ribitylamino)uracil contacts are provided by residues F23, 57–59, and 81–83; these read AFE and AVI. 86-87 provides a ligand contact to (2S)-2-hydroxy-3-oxobutyl phosphate; sequence AT. The active-site Proton donor is H89. Residue F114 participates in 5-amino-6-(D-ribitylamino)uracil binding. Residue R128 participates in (2S)-2-hydroxy-3-oxobutyl phosphate binding.

The protein belongs to the DMRL synthase family.

It carries out the reaction (2S)-2-hydroxy-3-oxobutyl phosphate + 5-amino-6-(D-ribitylamino)uracil = 6,7-dimethyl-8-(1-D-ribityl)lumazine + phosphate + 2 H2O + H(+). The protein operates within cofactor biosynthesis; riboflavin biosynthesis; riboflavin from 2-hydroxy-3-oxobutyl phosphate and 5-amino-6-(D-ribitylamino)uracil: step 1/2. Its function is as follows. Catalyzes the formation of 6,7-dimethyl-8-ribityllumazine by condensation of 5-amino-6-(D-ribitylamino)uracil with 3,4-dihydroxy-2-butanone 4-phosphate. This is the penultimate step in the biosynthesis of riboflavin. This Campylobacter concisus (strain 13826) protein is 6,7-dimethyl-8-ribityllumazine synthase.